A 636-amino-acid polypeptide reads, in one-letter code: Ketocytochalasin monooxygenase (636 aa).

Residues Asp125, 133-136, Asp145, Tyr151, and Ile195 each bind FAD; that span reads TWYW. 143 to 145 serves as a coordination point for NADP(+); sequence ACD. Residues 279-285, 302-303, and 420-421 each bind NADP(+); these read TGASAVQ, RT, and KR. FAD is bound at residue Trp534.

This sequence belongs to the FAD-binding monooxygenase family. Requires FAD as cofactor.

The catalysed reaction is ketocytochalasin + NADPH + O2 + H(+) = iso-precytochalasin + NADP(+) + H2O. It catalyses the reaction iso-precytochalasin + NADPH + O2 + H(+) = cytochalasin Z16 + NADP(+) + H2O. Its pathway is mycotoxin biosynthesis. In terms of biological role, ketocytochalasin monooxygenase; part of the gene cluster that mediates the biosynthesis of a family of the mycotoxins cytochalasins E and K. The hybrid PKS-NRPS synthetase ccsA and the enoyl reductase ccsC are responsible for fusion of phenylalanine with an octaketide backbone and subsequent release of the stable tetramic acid precursor. The polyketide synthase module (PKS) of the PKS-NRPS ccsA is responsible for the synthesis of the octaketide backbone. The downstream nonribosomal peptide synthetase (NRPS) amidates the carboxyl end of the octaketide with a phenylalanine. A reductase-like domain (R) at the C-terminus catalyzes the reductive release of the polyketide-amino acid intermediate. Because ccsA lacks a designated enoylreductase (ER) domain, the required activity is provided the enoyl reductase ccsC. Upon formation of the 11-membered carbocycle-fused perhydroisoindolone intermediate, a number of oxidative steps are required to afford the final cytochalasin E and K, including two hydroxylations at C17 and C18, one alcohol oxidation at C17, one epoxidation at C6 and C7 and two Baeyer-Villiger oxidations. The oxidative modification at C17, C18 and the C6-C7 epoxidation are likely to be catalyzed by the two cytochrome P450 oxygenases ccsD and ccsG. CcsD may be responsible for the epoxidation of the C6-C7 double bond. CcsG may be responsible for the successive oxidative modifications at C17 and C18. The double Baeyer-Villiger oxidations of ketocytochalasin to precytochalasin and cytochalasin Z(16) are among the final steps leading to cytochalasin E and K and are catalyzed by ccsB. The first oxygen insertion step follows that of the classic BVMO mechanism, generating the ester precytochalasin. Release of precytochalasin into an aqueous environment can generate the shunt product iso-precytochalasin through spontaneous isomerization. Alternatively, precytochalasin can undergo further oxidation by ccsB to yield the in-line carbonate-containing cytochalasin Z(16). Cytochalasin Z(16) is a precursor to cytochalasin E and cytochalasin K, whereas iso-precytochalasin is a precursor to cytochalasin Z(17) and rosellichalasin. The hydrolyase ccsE may catalyze hydrolysis of epoxide bond in cytochalasin E to afford cytochalasin K. The function of ccsF has not been assigned but it may play a role in post-PKS-NRPS biosynthetic step, resistance or transport of cytochalasins and related PKS-NRPS products. The polypeptide is Ketocytochalasin monooxygenase (Aspergillus clavatus (strain ATCC 1007 / CBS 513.65 / DSM 816 / NCTC 3887 / NRRL 1 / QM 1276 / 107)).